A 991-amino-acid polypeptide reads, in one-letter code: Ribonuclease TUDOR 1 (991 aa).

The residue at position 2 (A2) is an N-acetylalanine. TNase-like domains are found at residues 8–151, 186–364, 378–557, and 587–714; these read QWLK…RWSK, KPME…MWAN, QNFT…IHSA, and RRIP…IWEN. The interval 227–250 is disordered; the sequence is RTTNGSVVETVPDEPNGDVSAESR. The region spanning 782-847 is the Tudor domain; it reads NPKRGDIVLA…RPIDPSVSAA (66 aa). Y970 bears the Phosphotyrosine mark. Residues 971 to 991 are disordered; the sequence is GDIESDDEDTGPARKPAGGRR. S975 bears the Phosphoserine mark. The residue at position 980 (T980) is a Phosphothreonine.

As to expression, expressed in seeds, leaves, flowers, roots and siliques (at protein level). Accumulates in the cap and elongation zone of the root apices (at protein level).

It is found in the cytoplasm. Its subcellular location is the cytoplasmic granule. It localises to the perinuclear region. The protein resides in the endoplasmic reticulum. With respect to regulation, repressed by the specific inhibitor 3',5'-deoxythymidine bisphosphate (pdTp); this RNase activity inhibition impairs subcellular relocation upon abiotic stress and leads to reduced stress resistance. Functionally, cytoprotective ribonuclease (RNase) required for resistance to abiotic stresses, acting as a positive regulator of mRNA decapping during stress. Essential for the integrity and function of cytoplasmic messenger ribonucleoprotein (mRNP) complexes called stress granules (SGs) and processing bodies (PBs), sites of post-transcriptional gene regulation during stress (e.g. salt and heat). Involved in gibberellic acid (GA) biosynthesis. Essential for stress tolerance, probably by regulating mRNAs entering the secretory pathway. Component of stress granules (SGs) that regulates growth under salt stress by modulating levels of GA20OX3 mRNA. Binds GA20OX3 mRNA. May inhibit the degradation of mRNAs involved in stress adaptation. The polypeptide is Ribonuclease TUDOR 1 (Arabidopsis thaliana (Mouse-ear cress)).